A 171-amino-acid polypeptide reads, in one-letter code: Co-chaperone protein HscB homolog (171 aa).

In terms of domain architecture, J spans 2–74 (NYFELFGLPI…LRRAEYLLSL (73 aa)).

It belongs to the HscB family. As to quaternary structure, interacts with HscA and stimulates its ATPase activity.

Functionally, co-chaperone involved in the maturation of iron-sulfur cluster-containing proteins. Seems to help targeting proteins to be folded toward HscA. The chain is Co-chaperone protein HscB homolog from Vibrio cholerae serotype O1 (strain M66-2).